Consider the following 276-residue polypeptide: Protein-glutamine gamma-glutamyltransferase (276 aa).

The protein belongs to the bacillus TGase family.

It catalyses the reaction L-glutaminyl-[protein] + L-lysyl-[protein] = [protein]-L-lysyl-N(6)-5-L-glutamyl-[protein] + NH4(+). In terms of biological role, probably plays a role in the assembly of the spore coat proteins by catalyzing epsilon-(gamma-glutamyl)lysine cross-links. The protein is Protein-glutamine gamma-glutamyltransferase of Bacillus anthracis (strain A0248).